The sequence spans 369 residues: Putative 2-aminoethylphosphonate import ATP-binding protein PhnT (369 aa).

One can recognise an ABC transporter domain in the interval Ile-19–Leu-250. An ATP-binding site is contributed by Gly-51–Thr-58.

This sequence belongs to the ABC transporter superfamily. 2-aminoethylphosphonate importer (TC 3.A.1.11.5) family.

Its subcellular location is the cell inner membrane. Functionally, probably part of the PhnSTUV complex (TC 3.A.1.11.5) involved in 2-aminoethylphosphonate import. Probably responsible for energy coupling to the transport system. The polypeptide is Putative 2-aminoethylphosphonate import ATP-binding protein PhnT (phnT) (Salmonella paratyphi A (strain ATCC 9150 / SARB42)).